The primary structure comprises 642 residues: Kinesin-2b (642 aa).

In terms of domain architecture, Kinesin motor spans 12-344 (NVMVMVRVRP…LRYADRAKQI (333 aa)). 107 to 114 (GQTGSGKT) is a binding site for ATP. Positions 110, 112, 113, and 114 each coordinate ADP. Thr114 provides a ligand contact to Mg(2+). Residues 415–475 (VQSLRKNLDK…ERKAKERQLM (61 aa)) are a coiled coil.

Belongs to the TRAFAC class myosin-kinesin ATPase superfamily. Kinesin family. Kinesin II subfamily.

It is found in the cell projection. The protein resides in the cilium. It localises to the flagellum. The protein localises to the cytoplasm. Its subcellular location is the cytoskeleton. It is found in the flagellum axoneme. The protein resides in the flagellum basal body. In terms of biological role, involved in anterograde intraflagellar transport (IFT). Involved in flagellar assembly. The sequence is that of Kinesin-2b from Giardia intestinalis (strain ATCC 50803 / WB clone C6) (Giardia lamblia).